Consider the following 504-residue polypeptide: Carnosic acid synthase (504 aa).

The chain crosses the membrane as a helical span at residues 4-24; that stretch reads FIILSLAFIAAWVVYSRWSEY. C447 is a binding site for heme.

The protein belongs to the cytochrome P450 family. The cofactor is heme. As to expression, expressed in glandular trichomes of young leaves.

Its subcellular location is the membrane. The catalysed reaction is 11-hydroxyferruginol + 3 reduced [NADPH--hemoprotein reductase] + 3 O2 = carnosate + 3 oxidized [NADPH--hemoprotein reductase] + 4 H2O + 4 H(+). It carries out the reaction miltiradiene + 2 reduced [NADPH--hemoprotein reductase] + 2 O2 = miltiradien-20-al + 2 oxidized [NADPH--hemoprotein reductase] + 3 H2O + 2 H(+). The enzyme catalyses ferruginol + 3 reduced [NADPH--hemoprotein reductase] + 3 O2 = pisiferate + 3 oxidized [NADPH--hemoprotein reductase] + 4 H2O + 4 H(+). It functions in the pathway secondary metabolite biosynthesis; terpenoid biosynthesis. Monooxygenase involved in the biosynthesis of carnosate, a potent antioxidant labdane-related diterpene natural products. Catalyzes the oxidation of 11-hydroxyferruginol to produce carnosate. Mediates the conversion of miltiradien into miltiradien-20-al. Also involved in the production of pisiferic acid and derivative products from ferruginol. The chain is Carnosic acid synthase from Rosmarinus officinalis (Rosemary).